A 123-amino-acid chain; its full sequence is uncharacterized protein (123 aa).

The residue at position 56 (Thr-56) is a Phosphothreonine. Residues Ser-73, Ser-87, Ser-97, Ser-113, and Ser-119 each carry the phosphoserine modification.

In terms of tissue distribution, highly expressed in the kidney (at protein level).

It localises to the cytoplasm. This is an uncharacterized protein from Felis catus (Cat).